The chain runs to 227 residues: ATP synthase F(0) complex subunit a (227 aa).

6 helical membrane passes run 14-34 (LLGI…LPSP), 69-89 (WALI…LGLL), 98-118 (QLSM…LTGL), 139-159 (IPAL…ALGV), 174-194 (LIST…VLTA), and 196-216 (VLLL…YVFV).

It belongs to the ATPase A chain family. As to quaternary structure, component of the ATP synthase complex composed at least of ATP5F1A/subunit alpha, ATP5F1B/subunit beta, ATP5MC1/subunit c (homooctomer), MT-ATP6/subunit a, MT-ATP8/subunit 8, ATP5ME/subunit e, ATP5MF/subunit f, ATP5MG/subunit g, ATP5MK/subunit k, ATP5MJ/subunit j, ATP5F1C/subunit gamma, ATP5F1D/subunit delta, ATP5F1E/subunit epsilon, ATP5PF/subunit F6, ATP5PB/subunit b, ATP5PD/subunit d, ATP5PO/subunit OSCP. ATP synthase complex consists of a soluble F(1) head domain (subunits alpha(3) and beta(3)) - the catalytic core - and a membrane F(0) domain - the membrane proton channel (subunits c, a, 8, e, f, g, k and j). These two domains are linked by a central stalk (subunits gamma, delta, and epsilon) rotating inside the F1 region and a stationary peripheral stalk (subunits F6, b, d, and OSCP). Interacts with DNAJC30; interaction is direct.

Its subcellular location is the mitochondrion inner membrane. The catalysed reaction is H(+)(in) = H(+)(out). Subunit a, of the mitochondrial membrane ATP synthase complex (F(1)F(0) ATP synthase or Complex V) that produces ATP from ADP in the presence of a proton gradient across the membrane which is generated by electron transport complexes of the respiratory chain. ATP synthase complex consist of a soluble F(1) head domain - the catalytic core - and a membrane F(1) domain - the membrane proton channel. These two domains are linked by a central stalk rotating inside the F(1) region and a stationary peripheral stalk. During catalysis, ATP synthesis in the catalytic domain of F(1) is coupled via a rotary mechanism of the central stalk subunits to proton translocation. With the subunit c (ATP5MC1), forms the proton-conducting channel in the F(0) domain, that contains two crucial half-channels (inlet and outlet) that facilitate proton movement from the mitochondrial intermembrane space (IMS) into the matrix. Protons are taken up via the inlet half-channel and released through the outlet half-channel, following a Grotthuss mechanism. The chain is ATP synthase F(0) complex subunit a from Struthio camelus (Common ostrich).